A 338-amino-acid chain; its full sequence is Glycerol-3-phosphate dehydrogenase [NAD(P)+] (338 aa).

The NADPH site is built by Ser13, Trp14, and Lys108. Sn-glycerol 3-phosphate contacts are provided by Lys108, Gly139, and Ser141. Ala143 is a binding site for NADPH. Sn-glycerol 3-phosphate-binding residues include Lys194, Asp247, Ser257, Arg258, and Asn259. The Proton acceptor role is filled by Lys194. NADPH is bound at residue Arg258. NADPH-binding residues include Val282 and Glu284.

Belongs to the NAD-dependent glycerol-3-phosphate dehydrogenase family.

It is found in the cytoplasm. The enzyme catalyses sn-glycerol 3-phosphate + NAD(+) = dihydroxyacetone phosphate + NADH + H(+). It catalyses the reaction sn-glycerol 3-phosphate + NADP(+) = dihydroxyacetone phosphate + NADPH + H(+). It functions in the pathway membrane lipid metabolism; glycerophospholipid metabolism. Catalyzes the reduction of the glycolytic intermediate dihydroxyacetone phosphate (DHAP) to sn-glycerol 3-phosphate (G3P), the key precursor for phospholipid synthesis. The sequence is that of Glycerol-3-phosphate dehydrogenase [NAD(P)+] from Listeria monocytogenes serotype 4b (strain CLIP80459).